A 189-amino-acid chain; its full sequence is Glycerol-3-phosphate acyltransferase (189 aa).

A run of 5 helical transmembrane segments spans residues 1-21, 50-70, 72-92, 111-131, and 151-171; these read MVWL…AVLL, KLAI…VLVA, WLGL…IGHL, MLLG…LLTF, and LLAW…GLIV.

The protein belongs to the PlsY family. Probably interacts with PlsX.

Its subcellular location is the cell inner membrane. It catalyses the reaction an acyl phosphate + sn-glycerol 3-phosphate = a 1-acyl-sn-glycero-3-phosphate + phosphate. Its pathway is lipid metabolism; phospholipid metabolism. Its function is as follows. Catalyzes the transfer of an acyl group from acyl-phosphate (acyl-PO(4)) to glycerol-3-phosphate (G3P) to form lysophosphatidic acid (LPA). This enzyme utilizes acyl-phosphate as fatty acyl donor, but not acyl-CoA or acyl-ACP. This chain is Glycerol-3-phosphate acyltransferase, found in Pseudomonas aeruginosa (strain LESB58).